The primary structure comprises 277 residues: Cis-2,3-dihydrobiphenyl-2,3-diol dehydrogenase (277 aa).

NAD(+) is bound by residues 9–36 (LITG…AVLD) and Asp59. Residue Ser142 coordinates substrate. The Proton acceptor role is filled by Tyr155. Lys159 lines the NAD(+) pocket.

The protein belongs to the short-chain dehydrogenases/reductases (SDR) family.

The catalysed reaction is (2R,3S)-3-phenylcyclohexa-3,5-diene-1,2-diol + NAD(+) = biphenyl-2,3-diol + NADH + H(+). It functions in the pathway xenobiotic degradation; biphenyl degradation; 2-hydroxy-2,4-pentadienoate and benzoate from biphenyl: step 2/4. This Paraburkholderia xenovorans (strain LB400) protein is Cis-2,3-dihydrobiphenyl-2,3-diol dehydrogenase (bphB).